The primary structure comprises 197 residues: Molybdenum cofactor guanylyltransferase (197 aa).

GTP-binding positions include 10–12, lysine 23, aspartate 69, and aspartate 99; that span reads LAG. Aspartate 99 lines the Mg(2+) pocket.

This sequence belongs to the MobA family. In terms of assembly, monomer. Mg(2+) serves as cofactor.

The protein resides in the cytoplasm. The enzyme catalyses Mo-molybdopterin + GTP + H(+) = Mo-molybdopterin guanine dinucleotide + diphosphate. Functionally, transfers a GMP moiety from GTP to Mo-molybdopterin (Mo-MPT) cofactor (Moco or molybdenum cofactor) to form Mo-molybdopterin guanine dinucleotide (Mo-MGD) cofactor. This chain is Molybdenum cofactor guanylyltransferase, found in Serratia proteamaculans (strain 568).